The primary structure comprises 395 residues: E3 ubiquitin-protein ligase RDUF1 (395 aa).

2 disordered regions span residues 1-22 (MMPNSRSATITPTTESTTTTTT) and 107-130 (PVIVLHGGGGGGAGERVENEEGDG). Low complexity predominate over residues 9–22 (TITPTTESTTTTTT). Positions 121 to 130 (ERVENEEGDG) are enriched in basic and acidic residues. The segment at 215 to 256 (CAVCTEVFEAGIEGREMPCKHIFHGDCIVPWLSIRNSCPVCR) adopts an RING-type; atypical zinc-finger fold.

Expressed in root tips, leaf tips, junction of carpels and pedicels, stigma, anthers, pollen, vasculature of sepals and petals, immature seeds and embryos.

The protein resides in the cytoplasm. The protein localises to the cytosol. It localises to the nucleus. The enzyme catalyses S-ubiquitinyl-[E2 ubiquitin-conjugating enzyme]-L-cysteine + [acceptor protein]-L-lysine = [E2 ubiquitin-conjugating enzyme]-L-cysteine + N(6)-ubiquitinyl-[acceptor protein]-L-lysine.. The protein operates within protein modification; protein ubiquitination. In terms of biological role, E3 ubiquitin-protein ligase involved in the positive regulation of abscisic acid-dependent drought stress responses. Involved in the positive regulation of responses to salt and osmotic stresses during seed germination and early seedling development. Possesses E3 ubiquitin ligase activity in vitro. The protein is E3 ubiquitin-protein ligase RDUF1 of Arabidopsis thaliana (Mouse-ear cress).